A 174-amino-acid chain; its full sequence is Peptide methionine sulfoxide reductase MsrA (174 aa).

Residue cysteine 10 is part of the active site.

This sequence belongs to the MsrA Met sulfoxide reductase family.

The catalysed reaction is L-methionyl-[protein] + [thioredoxin]-disulfide + H2O = L-methionyl-(S)-S-oxide-[protein] + [thioredoxin]-dithiol. It carries out the reaction [thioredoxin]-disulfide + L-methionine + H2O = L-methionine (S)-S-oxide + [thioredoxin]-dithiol. Has an important function as a repair enzyme for proteins that have been inactivated by oxidation. Catalyzes the reversible oxidation-reduction of methionine sulfoxide in proteins to methionine. This chain is Peptide methionine sulfoxide reductase MsrA, found in Pseudarthrobacter chlorophenolicus (strain ATCC 700700 / DSM 12829 / CIP 107037 / JCM 12360 / KCTC 9906 / NCIMB 13794 / A6) (Arthrobacter chlorophenolicus).